Reading from the N-terminus, the 210-residue chain is ATP phosphoribosyltransferase (210 aa).

This sequence belongs to the ATP phosphoribosyltransferase family. Short subfamily. In terms of assembly, heteromultimer composed of HisG and HisZ subunits.

The protein localises to the cytoplasm. It carries out the reaction 1-(5-phospho-beta-D-ribosyl)-ATP + diphosphate = 5-phospho-alpha-D-ribose 1-diphosphate + ATP. Its pathway is amino-acid biosynthesis; L-histidine biosynthesis; L-histidine from 5-phospho-alpha-D-ribose 1-diphosphate: step 1/9. Functionally, catalyzes the condensation of ATP and 5-phosphoribose 1-diphosphate to form N'-(5'-phosphoribosyl)-ATP (PR-ATP). Has a crucial role in the pathway because the rate of histidine biosynthesis seems to be controlled primarily by regulation of HisG enzymatic activity. This Caldanaerobacter subterraneus subsp. tengcongensis (strain DSM 15242 / JCM 11007 / NBRC 100824 / MB4) (Thermoanaerobacter tengcongensis) protein is ATP phosphoribosyltransferase.